The sequence spans 125 residues: MPHSSDSSDSSFSRSPPPGKQDSSDDVRKVQRREKNRIAAQKSRQRQTQKADTLHLESEDLEKQNAALRKEIKQLTEELKYFTSVLSSHEPLCSVLASGTPSPPEVVYSAHAFHQPHISSPRFQP.

Low complexity predominate over residues 1-14; it reads MPHSSDSSDSSFSR. The interval 1 to 59 is disordered; sequence MPHSSDSSDSSFSRSPPPGKQDSSDDVRKVQRREKNRIAAQKSRQRQTQKADTLHLESE. A bZIP domain is found at 26-89; it reads DVRKVQRREK…KYFTSVLSSH (64 aa). Residues 28–50 form a basic motif region; that stretch reads RKVQRREKNRIAAQKSRQRQTQK. A Phosphoserine modification is found at S43. T48 is modified (phosphothreonine). The segment at 54–75 is leucine-zipper; it reads LHLESEDLEKQNAALRKEIKQL.

Belongs to the bZIP family. Heterodimer; mainly heterodimerizes with JUNB. The BATF-JUNB heterodimer interacts with IRF4 and IRF8. Interacts (via bZIP domain) with IRF4 and IRF8; the interaction is direct. Also forms heterodimers with JUN and JUND. Interacts with IFI35. Phosphorylated on serine and threonine residues and at least one tyrosine residue. Phosphorylation at Ser-43 inhibit DNA binding activity and transforms it as a negative regulator of AP-1 mediated transcription. In terms of tissue distribution, detected in postnatal and adult lymphoid tissues such as thymus, spleen and lymph nodes. In thymus most concentrated expression is found in the immediate cortical layer. Differentially expressed during T-cell development in thymus. Highly expressed in Th17, Th1 and Th2 cells and in activated B-cells.

The protein resides in the nucleus. Its subcellular location is the cytoplasm. Its function is as follows. AP-1 family transcription factor that controls the differentiation of lineage-specific cells in the immune system: specifically mediates the differentiation of T-helper 17 cells (Th17), follicular T-helper cells (TfH), CD8(+) dendritic cells and class-switch recombination (CSR) in B-cells. Acts via the formation of a heterodimer with JUNB that recognizes and binds DNA sequence 5'-TGA[CG]TCA-3'. The BATF-JUNB heterodimer also forms a complex with IRF4 (or IRF8) in immune cells, leading to recognition of AICE sequence (5'-TGAnTCA/GAAA-3'), an immune-specific regulatory element, followed by cooperative binding of BATF and IRF4 (or IRF8) and activation of genes. Controls differentiation of T-helper cells producing interleukin-17 (Th17 cells) by binding to Th17-associated gene promoters: regulates expression of the transcription factor RORC itself and RORC target genes such as IL17 (IL17A or IL17B). Also involved in differentiation of follicular T-helper cells (TfH) by directing expression of BCL6 and MAF. In B-cells, involved in class-switch recombination (CSR) by controlling the expression of both AICDA and of germline transcripts of the intervening heavy-chain region and constant heavy-chain region (I(H)-C(H)). Following infection, can participate in CD8(+) dendritic cell differentiation via interaction with IRF4 and IRF8 to mediate cooperative gene activation. Regulates effector CD8(+) T-cell differentiation by regulating expression of SIRT1. Following DNA damage, part of a differentiation checkpoint that limits self-renewal of hematopoietic stem cells (HSCs): up-regulated by STAT3, leading to differentiation of HSCs, thereby restricting self-renewal of HSCs. In Mus musculus (Mouse), this protein is Basic leucine zipper transcriptional factor ATF-like (Batf).